The sequence spans 346 residues: Flap endonuclease 1 (346 aa).

The segment at 1 to 102 (MGVTELGKLI…LEIEQRKKAK (102 aa)) is N-domain. Mg(2+) contacts are provided by aspartate 31, aspartate 84, glutamate 156, glutamate 158, aspartate 177, aspartate 179, and aspartate 239. The tract at residues 120-261 (DVAKYAKRAI…KALKLIWEFG (142 aa)) is I-domain.

The protein belongs to the XPG/RAD2 endonuclease family. FEN1 subfamily. In terms of assembly, interacts with PCNA. PCNA stimulates the nuclease activity without altering cleavage specificity. The cofactor is Mg(2+).

In terms of biological role, structure-specific nuclease with 5'-flap endonuclease and 5'-3' exonuclease activities involved in DNA replication and repair. During DNA replication, cleaves the 5'-overhanging flap structure that is generated by displacement synthesis when DNA polymerase encounters the 5'-end of a downstream Okazaki fragment. Binds the unpaired 3'-DNA end and kinks the DNA to facilitate 5' cleavage specificity. Cleaves one nucleotide into the double-stranded DNA from the junction in flap DNA, leaving a nick for ligation. Also involved in the base excision repair (BER) pathway. Acts as a genome stabilization factor that prevents flaps from equilibrating into structures that lead to duplications and deletions. Also possesses 5'-3' exonuclease activity on nicked or gapped double-stranded DNA. The polypeptide is Flap endonuclease 1 (Pyrobaculum calidifontis (strain DSM 21063 / JCM 11548 / VA1)).